Consider the following 136-residue polypeptide: MKKSNFSNVNLSMGTGRRKSSVARVYIREGSGNIKVNNRDFDSYIQLENLRTMALSPLVLTNTLGKYDLYINVYGGGISGQSGAIRHGISRALFKLDESNKMILRSNGFLTRDSRKVERKKFGQKKARKSFQFSKR.

It belongs to the universal ribosomal protein uS9 family.

The chain is Small ribosomal subunit protein uS9 from Borreliella burgdorferi (strain ZS7) (Borrelia burgdorferi).